The chain runs to 458 residues: LysM domain-containing protein ARB_05157 (458 aa).

Residues 1 to 19 form the signal peptide; it reads MVSLKVCFLLLASSELAFG. Positions 157–203 constitute a LysM 1 domain; that stretch reads AFHLVKQGEDCGTISATYGITSAQFLAWNPSAGKDCTGLWANAYACV. A disordered region spans residues 210–232; it reads PPKTTSQAPQPTPTKPSNGIETP. Residues 212–229 show a composition bias toward polar residues; it reads KTTSQAPQPTPTKPSNGI. LysM domains lie at 245–291, 325–371, and 409–455; these read KFHL…YACV, KFYL…YSCV, and KFHF…YLCV.

The protein localises to the secreted. Functionally, might have a role in sequestration of chitin oligosaccharides (breakdown products of fungal cell walls that are released during invasion and act as triggers of host immunity) to dampen host defense. In Arthroderma benhamiae (strain ATCC MYA-4681 / CBS 112371) (Trichophyton mentagrophytes), this protein is LysM domain-containing protein ARB_05157.